A 134-amino-acid chain; its full sequence is Phosphoribosyl-AMP cyclohydrolase (134 aa).

Aspartate 77 is a binding site for Mg(2+). Zn(2+) is bound at residue cysteine 78. Mg(2+) contacts are provided by aspartate 79 and aspartate 81. Residues cysteine 95 and cysteine 102 each coordinate Zn(2+).

This sequence belongs to the PRA-CH family. In terms of assembly, homodimer. Mg(2+) serves as cofactor. Zn(2+) is required as a cofactor.

Its subcellular location is the cytoplasm. It carries out the reaction 1-(5-phospho-beta-D-ribosyl)-5'-AMP + H2O = 1-(5-phospho-beta-D-ribosyl)-5-[(5-phospho-beta-D-ribosylamino)methylideneamino]imidazole-4-carboxamide. It functions in the pathway amino-acid biosynthesis; L-histidine biosynthesis; L-histidine from 5-phospho-alpha-D-ribose 1-diphosphate: step 3/9. Its function is as follows. Catalyzes the hydrolysis of the adenine ring of phosphoribosyl-AMP. The sequence is that of Phosphoribosyl-AMP cyclohydrolase from Pseudomonas paraeruginosa (strain DSM 24068 / PA7) (Pseudomonas aeruginosa (strain PA7)).